Consider the following 311-residue polypeptide: Malate dehydrogenase (311 aa).

NAD(+) is bound by residues 10–15 and Asp-35; that span reads GAGRVG. The substrate site is built by Arg-84 and Arg-90. NAD(+)-binding positions include Asn-97 and 120-122; that span reads VTN. Substrate is bound by residues Asn-122 and Arg-153. Catalysis depends on His-177, which acts as the Proton acceptor.

The protein belongs to the LDH/MDH superfamily. MDH type 3 family.

The catalysed reaction is (S)-malate + NAD(+) = oxaloacetate + NADH + H(+). In terms of biological role, catalyzes the reversible oxidation of malate to oxaloacetate. The polypeptide is Malate dehydrogenase (Nitrosococcus oceani (strain ATCC 19707 / BCRC 17464 / JCM 30415 / NCIMB 11848 / C-107)).